The chain runs to 524 residues: Ribosomal protein uS12 methylthiotransferase RimO (524 aa).

A compositionally biased stretch (polar residues) spans 20–31; that stretch reads NSQTASDSTQPA. The segment at 20–59 is disordered; that stretch reads NSQTASDSTQPAASAYHHKANHNQNRSIEQSAQQAAEQSL. Low complexity predominate over residues 48-58; sequence EQSAQQAAEQS. One can recognise an MTTase N-terminal domain in the interval 67-177; sequence PKVGFVSLGC…VITAVSTHAP (111 aa). 6 residues coordinate [4Fe-4S] cluster: Cys-76, Cys-112, Cys-141, Cys-216, Cys-220, and Cys-223. Positions 202–443 constitute a Radical SAM core domain; that stretch reads LTPSHYAYLK…MAVQQQISEQ (242 aa). The TRAM domain maps to 446–519; the sequence is QEKVGKTMTV…EYDLFASYDA (74 aa).

The protein belongs to the methylthiotransferase family. RimO subfamily. [4Fe-4S] cluster is required as a cofactor.

It is found in the cytoplasm. The catalysed reaction is L-aspartate(89)-[ribosomal protein uS12]-hydrogen + (sulfur carrier)-SH + AH2 + 2 S-adenosyl-L-methionine = 3-methylsulfanyl-L-aspartate(89)-[ribosomal protein uS12]-hydrogen + (sulfur carrier)-H + 5'-deoxyadenosine + L-methionine + A + S-adenosyl-L-homocysteine + 2 H(+). Its function is as follows. Catalyzes the methylthiolation of an aspartic acid residue of ribosomal protein uS12. The chain is Ribosomal protein uS12 methylthiotransferase RimO from Psychrobacter sp. (strain PRwf-1).